Here is a 38-residue protein sequence, read N- to C-terminus: Large ribosomal subunit protein bL36 (38 aa).

The protein belongs to the bacterial ribosomal protein bL36 family.

This chain is Large ribosomal subunit protein bL36, found in Streptococcus agalactiae serotype III (strain NEM316).